The following is a 397-amino-acid chain: Putative 8-amino-7-oxononanoate synthase (397 aa).

Residue Arg22 participates in substrate binding. Position 109-110 (109-110 (GW)) interacts with pyridoxal 5'-phosphate. His139 lines the substrate pocket. Residues Ser187, 212 to 215 (DEAH), and 241 to 244 (TFSK) each bind pyridoxal 5'-phosphate. Lys244 is subject to N6-(pyridoxal phosphate)lysine. Thr358 contacts substrate.

It belongs to the class-II pyridoxal-phosphate-dependent aminotransferase family. BioF subfamily. Homodimer. Pyridoxal 5'-phosphate serves as cofactor.

It carries out the reaction 6-carboxyhexanoyl-[ACP] + L-alanine + H(+) = (8S)-8-amino-7-oxononanoate + holo-[ACP] + CO2. It functions in the pathway cofactor biosynthesis; biotin biosynthesis. Functionally, catalyzes the decarboxylative condensation of pimeloyl-[acyl-carrier protein] and L-alanine to produce 8-amino-7-oxononanoate (AON), [acyl-carrier protein], and carbon dioxide. This Bordetella parapertussis (strain 12822 / ATCC BAA-587 / NCTC 13253) protein is Putative 8-amino-7-oxononanoate synthase (bioF).